The primary structure comprises 279 residues: Borealin (279 aa).

Residues 135-152 (KTKAKVAAKKPSTARKTR) are compositionally biased toward basic residues. Residues 135-180 (KTKAKVAAKKPSTARKTRASTANLTNTSKRTSKRGRATPSASKQIE) form a disordered region. Residues 153–163 (ASTANLTNTSK) are compositionally biased toward polar residues.

This sequence belongs to the borealin family. Component of the CPC at least composed of survivin/birc5, incenp, cdca8/borealin and/or cdca9/dasra-A, and aurkb/aurora-B. Interacts with incenp (via N-terminus).

It localises to the nucleus. It is found in the chromosome. Its subcellular location is the centromere. The protein resides in the cytoplasm. The protein localises to the cytoskeleton. It localises to the spindle. Its function is as follows. Component of the chromosomal passenger complex (CPC), a complex that acts as a key regulator of mitosis. The CPC complex has essential functions at the centromere in ensuring correct chromosome alignment and segregation and is required for chromatin-induced microtubule stabilization and spindle assembly. Contributes to CPC function by facilitating loading of the CPC onto chromosomes. This chain is Borealin (cdca8), found in Xenopus tropicalis (Western clawed frog).